A 369-amino-acid chain; its full sequence is Virulence factor-related M protein (369 aa).

The N-terminal stretch at methionine 1–alanine 41 is a signal peptide. C repeat units follow at residues alanine 120–histidine 154, lysine 162–tyrosine 196, and glutamine 211–leucine 246. Basic and acidic residues-rich tracts occupy residues glutamate 125–threonine 165, aspartate 202–lysine 219, leucine 228–threonine 243, and glutamate 257–glutamine 271. Disordered stretches follow at residues glutamate 125–lysine 189 and aspartate 202–glutamine 271. A 2 X repeats, type A region spans residues serine 129–glutamate 200. The interval serine 132–lysine 241 is 3 X repeats, type B. 4 D repeats span residues alanine 272–glutamine 277, glycine 278–glutamate 283, alanine 286–glutamate 291, and alanine 293–glutamate 298. Over residues leucine 292–alanine 301 the composition is skewed to basic and acidic residues. Positions leucine 292–glutamate 341 are disordered. Over residues alanine 319–serine 338 the composition is skewed to polar residues. Residues leucine 336–glycine 340 carry the LPXTG sorting signal motif. Threonine 339 carries the post-translational modification Pentaglycyl murein peptidoglycan amidated threonine. Residues glycine 340–asparagine 369 constitute a propeptide, removed by sortase.

Belongs to the M protein family.

It localises to the secreted. It is found in the cell wall. This chain is Virulence factor-related M protein (ennX), found in Streptococcus pyogenes serotype M49.